Consider the following 243-residue polypeptide: Probable transcriptional regulatory protein BP2308 (243 aa).

The disordered stretch occupies residues 1–21 (MAGHSKWANIQHRKGRQDAKR).

The protein belongs to the TACO1 family.

The protein resides in the cytoplasm. This Bordetella pertussis (strain Tohama I / ATCC BAA-589 / NCTC 13251) protein is Probable transcriptional regulatory protein BP2308.